Consider the following 499-residue polypeptide: Glycerol kinase (499 aa).

Residue threonine 13 coordinates ADP. Threonine 13, threonine 14, and serine 15 together coordinate ATP. Position 13 (threonine 13) interacts with sn-glycerol 3-phosphate. Residue arginine 17 coordinates ADP. Arginine 83, glutamate 84, tyrosine 135, and aspartate 245 together coordinate sn-glycerol 3-phosphate. Residues arginine 83, glutamate 84, tyrosine 135, aspartate 245, and glutamine 246 each contribute to the glycerol site. The ADP site is built by threonine 267 and glycine 310. Residues threonine 267, glycine 310, glutamine 314, and glycine 411 each coordinate ATP. The ADP site is built by glycine 411 and asparagine 415.

This sequence belongs to the FGGY kinase family.

It carries out the reaction glycerol + ATP = sn-glycerol 3-phosphate + ADP + H(+). Its pathway is polyol metabolism; glycerol degradation via glycerol kinase pathway; sn-glycerol 3-phosphate from glycerol: step 1/1. Inhibited by fructose 1,6-bisphosphate (FBP). Functionally, key enzyme in the regulation of glycerol uptake and metabolism. Catalyzes the phosphorylation of glycerol to yield sn-glycerol 3-phosphate. This chain is Glycerol kinase, found in Stenotrophomonas maltophilia (strain R551-3).